A 185-amino-acid polypeptide reads, in one-letter code: Meiotic expression up-regulated protein 31 (185 aa).

The chain is Meiotic expression up-regulated protein 31 (meu31) from Schizosaccharomyces pombe (strain 972 / ATCC 24843) (Fission yeast).